The following is a 375-amino-acid chain: uncharacterized protein (375 aa).

The Cytoplasmic segment spans residues 1-2; the sequence is MR. A helical; Signal-anchor for type II membrane protein transmembrane segment spans residues 3–23; sequence WYSYVIPAVILSIIAISGVWW. The Lumenal portion of the chain corresponds to 24-375; that stretch reads NATLGTRLDQ…YIEQRLFPQP (352 aa).

It belongs to the glycosyltransferase 34 family.

It localises to the endoplasmic reticulum membrane. Its subcellular location is the golgi apparatus membrane. This is an uncharacterized protein from Schizosaccharomyces pombe (strain 972 / ATCC 24843) (Fission yeast).